The primary structure comprises 277 residues: Undecaprenyl-diphosphatase (277 aa).

A run of 5 helical transmembrane segments spans residues 83-103, 109-129, 188-208, 218-238, and 256-276; these read FALN…VFAS, LFAP…ILWI, ATEF…VYSV, ADIP…FLCV, and YRIV…VVWA.

The protein belongs to the UppP family.

The protein localises to the cell inner membrane. The enzyme catalyses di-trans,octa-cis-undecaprenyl diphosphate + H2O = di-trans,octa-cis-undecaprenyl phosphate + phosphate + H(+). Its function is as follows. Catalyzes the dephosphorylation of undecaprenyl diphosphate (UPP). Confers resistance to bacitracin. The protein is Undecaprenyl-diphosphatase of Janthinobacterium sp. (strain Marseille) (Minibacterium massiliensis).